Here is a 332-residue protein sequence, read N- to C-terminus: D-galactose/methyl-galactoside binding periplasmic protein MglB (332 aa).

A signal peptide spans 1–23; the sequence is MNKKVLTLSAVMASLLFGAHAHA. Beta-D-galactose contacts are provided by aspartate 37 and asparagine 114. Aspartate 37 and asparagine 114 together coordinate beta-D-glucose. Residues aspartate 157, asparagine 159, aspartate 161, lysine 163, and glutamine 165 each coordinate Ca(2+). The beta-D-galactose site is built by histidine 175, aspartate 177, and arginine 181. Beta-D-glucose-binding residues include histidine 175, aspartate 177, and arginine 181. Glutamate 228 is a binding site for Ca(2+). Asparagine 234, aspartate 259, and asparagine 279 together coordinate beta-D-galactose. 3 residues coordinate beta-D-glucose: asparagine 234, aspartate 259, and asparagine 279.

It belongs to the bacterial solute-binding protein 2 family. The ABC transporter complex is composed of one ATP-binding protein (MglA), two transmembrane proteins (MglC) and a solute-binding protein (MglB).

The protein resides in the periplasm. Functionally, part of the ABC transporter complex MglABC involved in galactose/methyl galactoside import. In addition, binds D-galactose and D-glucose and plays a role in the chemotaxis towards these two sugars by interacting with the Trg chemoreceptor. This Salmonella typhimurium (strain LT2 / SGSC1412 / ATCC 700720) protein is D-galactose/methyl-galactoside binding periplasmic protein MglB (mglB).